The chain runs to 506 residues: Glutamate--tRNA ligase (506 aa).

A 'HIGH' region motif is present at residues 9-19 (PSPTGFQHIGG). The 'KMSKS' region signature appears at 251–255 (KLSKR). Lysine 254 lines the ATP pocket.

This sequence belongs to the class-I aminoacyl-tRNA synthetase family. Glutamate--tRNA ligase type 1 subfamily. In terms of assembly, monomer.

It is found in the cytoplasm. The catalysed reaction is tRNA(Glu) + L-glutamate + ATP = L-glutamyl-tRNA(Glu) + AMP + diphosphate. Catalyzes the attachment of glutamate to tRNA(Glu) in a two-step reaction: glutamate is first activated by ATP to form Glu-AMP and then transferred to the acceptor end of tRNA(Glu). The chain is Glutamate--tRNA ligase from Treponema denticola (strain ATCC 35405 / DSM 14222 / CIP 103919 / JCM 8153 / KCTC 15104).